Consider the following 196-residue polypeptide: Pyridoxal 5'-phosphate synthase subunit PdxT (196 aa).

46-48 (GES) contacts L-glutamine. The Nucleophile role is filled by Cys78. L-glutamine is bound by residues Arg105 and 133 to 134 (IR). Catalysis depends on charge relay system residues His169 and Glu171.

It belongs to the glutaminase PdxT/SNO family. In the presence of PdxS, forms a dodecamer of heterodimers. Only shows activity in the heterodimer.

It catalyses the reaction aldehydo-D-ribose 5-phosphate + D-glyceraldehyde 3-phosphate + L-glutamine = pyridoxal 5'-phosphate + L-glutamate + phosphate + 3 H2O + H(+). The catalysed reaction is L-glutamine + H2O = L-glutamate + NH4(+). The protein operates within cofactor biosynthesis; pyridoxal 5'-phosphate biosynthesis. In terms of biological role, catalyzes the hydrolysis of glutamine to glutamate and ammonia as part of the biosynthesis of pyridoxal 5'-phosphate. The resulting ammonia molecule is channeled to the active site of PdxS. This Geobacillus kaustophilus (strain HTA426) protein is Pyridoxal 5'-phosphate synthase subunit PdxT.